Reading from the N-terminus, the 469-residue chain is Siroheme synthase (469 aa).

The tract at residues Met1–Leu211 is precorrin-2 dehydrogenase /sirohydrochlorin ferrochelatase. NAD(+) contacts are provided by residues Glu29–Gln30 and Asp50–Pro51. A Phosphoserine modification is found at Ser136. The tract at residues Gly227 to Asp469 is uroporphyrinogen-III C-methyltransferase. Pro236 contributes to the S-adenosyl-L-methionine binding site. Asp259 serves as the catalytic Proton acceptor. The active-site Proton donor is the Lys281. S-adenosyl-L-methionine contacts are provided by residues Gly312–Asp314, Ile317, Thr342–Ala343, Met394, and Gly423.

This sequence in the N-terminal section; belongs to the precorrin-2 dehydrogenase / sirohydrochlorin ferrochelatase family. The protein in the C-terminal section; belongs to the precorrin methyltransferase family.

It catalyses the reaction uroporphyrinogen III + 2 S-adenosyl-L-methionine = precorrin-2 + 2 S-adenosyl-L-homocysteine + H(+). The enzyme catalyses precorrin-2 + NAD(+) = sirohydrochlorin + NADH + 2 H(+). The catalysed reaction is siroheme + 2 H(+) = sirohydrochlorin + Fe(2+). It functions in the pathway cofactor biosynthesis; adenosylcobalamin biosynthesis; precorrin-2 from uroporphyrinogen III: step 1/1. It participates in cofactor biosynthesis; adenosylcobalamin biosynthesis; sirohydrochlorin from precorrin-2: step 1/1. Its pathway is porphyrin-containing compound metabolism; siroheme biosynthesis; precorrin-2 from uroporphyrinogen III: step 1/1. The protein operates within porphyrin-containing compound metabolism; siroheme biosynthesis; siroheme from sirohydrochlorin: step 1/1. It functions in the pathway porphyrin-containing compound metabolism; siroheme biosynthesis; sirohydrochlorin from precorrin-2: step 1/1. Multifunctional enzyme that catalyzes the SAM-dependent methylations of uroporphyrinogen III at position C-2 and C-7 to form precorrin-2 via precorrin-1. Then it catalyzes the NAD-dependent ring dehydrogenation of precorrin-2 to yield sirohydrochlorin. Finally, it catalyzes the ferrochelation of sirohydrochlorin to yield siroheme. The polypeptide is Siroheme synthase (Hahella chejuensis (strain KCTC 2396)).